Reading from the N-terminus, the 870-residue chain is Dynamin-2 (870 aa).

The 267-residue stretch at 28-294 (HLDLPQIAVV…LTNHIRESLP (267 aa)) folds into the Dynamin-type G domain. A G1 motif region spans residues 38 to 45 (GGQSAGKS). GDP contacts are provided by serine 41, glycine 43, lysine 44, serine 45, serine 46, arginine 59, and glycine 60. Residues 64-66 (VTR) are G2 motif. A G3 motif region spans residues 136 to 139 (DLPG). Positions 205–208 (TKLD) are G4 motif. GDP contacts are provided by lysine 206, aspartate 208, and aspartate 211. The residue at position 231 (tyrosine 231) is a Phosphotyrosine. The segment at 235 to 238 (VNRS) is G5 motif. Residues asparagine 236, arginine 237, and glutamine 239 each contribute to the GDP site. Lysine 299 carries the post-translational modification N6-acetyllysine. The PH domain occupies 519 to 625 (LVIRRGWLTI…WKASFLRAGV (107 aa)). Phosphotyrosine is present on tyrosine 597. Position 598 is an N6-acetyllysine (lysine 598). The region spanning 653-744 (VETIRNLVDS…IIGDISTSTV (92 aa)) is the GED domain. Residues 741–870 (TSTVSTPVPP…IRPAEPSLLD (130 aa)) are disordered. Residue threonine 755 is modified to Phosphothreonine. The span at 756 to 767 (WLQNTSSHSPTP) shows a compositional bias: polar residues. Phosphoserine; by CDK1 is present on serine 764. Positions 826–846 (SAPPQIPSRPARIPPGIPPGV) are enriched in pro residues. Over residues 847–864 (PSRRAPAAPSRPTIIRPA) the composition is skewed to low complexity.

It belongs to the TRAFAC class dynamin-like GTPase superfamily. Dynamin/Fzo/YdjA family. As to quaternary structure, oligomerizes into a helical polymer that self-assembles around the vesicle membrane, when associated to the menbrane through lipid binding. Interacts with SHANK1 and SHANK2. Interacts with SNX9. Interacts (via C-terminal proline-rich domain (PRD)) with SNX18 (via SH3 domain); this interaction regulates ATG9A and ATG16L1 trafficking from recycling endosomes to sites of autophagosome formation. Interacts with SNX33 (via SH3 domain). Interacts with PSTPIP1 (via SH3 domain). Interacts with CTNND2. Interacts (via C-terminal proline-rich domain (PRD)) with BIN1 (via SH3 domain); this interaction allows the recruitment of DNM2 to the membrane tubules and inhibits self-assembly-stimulated GTPase activity on the membrane. Interacts with GABARAP, GABARAPL1 and GABARAPL2. Interacts with MAP1LC3B (the lipidate and non-lipidated LC3 form); this interaction mediates recycling endosome scission leading to autophagosome release. Interacts with ITSN1. Interacts with MYOF. May interact with PIK3C3. May be a component of a complex composed of RAB5A (in GDP-bound form), DYN2 and PIK3C3. Interacts with SDC4; this interaction is markedly enhanced at focal ahesion site upon induction of focal adhesions and stress-fiber formation. Interacts with ACTN1. Interacts with CTTN; this interaction stimulates the intrinsic GTPase activity of DNM2 and stabilizes the association of DNM2 and actin filaments; in addition this interaction is stimulated by ligand binding to the receptor, leading to the recruitment of the DNM2-CTTN complex to the sequestered receptor-ligand complex to its internalization. Interacts with NOSTRIN (via SH3 domain); this interaction allows the recruitment of NOS3 to dynamin-positive structures. Interacts (via C-terminal proline-rich domain (PRD)) with SH3BP4 (via SH3 domain); this interaction controls the GTPase activity and is prevented by EGFR-induced tyrosine phosphorylation of either DNM2 or SH3BP4. Interacts with MYO1E (via SH3 domain). Interacts with TUBG1; this interaction may participate in centrosome cohesion. Post-translationally, phosphorylation at Ser-848 by GSK3-alpha relieves the inhibition of BIN1 and promotes endocytosis. Phosphorylation at Ser-764 by CDK1 is greatly increased upon mitotic entry. It regulates cytokinesis downstream of calcineurin, and does not affect clathrin-mediated endocytosis. Dephosphorylated by calcineurin/PP2 during cytokinesis in a Ca(2+)- and calmodulin-dependent manner. Phosphorylated on tyrosine residues by EGFR. Phosphorylated on tyrosine residues after activation of SRC. As to expression, ubiquitously expressed. Brain expression is restricted to glial cells and fibroblasts. Highest levels in the testis.

Its subcellular location is the cytoplasm. It localises to the cytoskeleton. The protein resides in the cytoplasmic vesicle. The protein localises to the clathrin-coated vesicle. It is found in the cell projection. Its subcellular location is the uropodium. It localises to the endosome. The protein resides in the microtubule organizing center. The protein localises to the centrosome. It is found in the centriole. Its subcellular location is the recycling endosome. It localises to the phagocytic cup. The protein resides in the phagosome membrane. The protein localises to the podosome. It is found in the cell junction. Its subcellular location is the postsynaptic density. It localises to the synapse. The protein resides in the synaptosome. The protein localises to the midbody. It is found in the membrane. Its subcellular location is the clathrin-coated pit. It localises to the cell membrane. It carries out the reaction GTP + H2O = GDP + phosphate + H(+). Functionally, catalyzes the hydrolysis of GTP and utilizes this energy to mediate vesicle scission at plasma membrane during endocytosis and filament remodeling at many actin structures during organization of the actin cytoskeleton. Plays an important role in vesicular trafficking processes, namely clathrin-mediated endocytosis (CME), exocytic and clathrin-coated vesicle from the trans-Golgi network, and PDGF stimulated macropinocytosis. During vesicular trafficking process, associates to the membrane, through lipid binding, and self-assembles into ring-like structure through oligomerization to form a helical polymer around the vesicle membrane and leading to vesicle scission. Plays a role in organization of the actin cytoskeleton by mediating arrangement of stress fibers and actin bundles in podocytes. During organization of the actin cytoskeleton, self-assembles into ring-like structure that directly bundles actin filaments to form typical membrane tubules decorated with dynamin spiral polymers. Self-assembly increases GTPase activity and the GTP hydrolysis causes the rapid depolymerization of dynamin spiral polymers, and results in dispersion of actin bundles. Remodels, through its interaction with CTTN, bundled actin filaments in a GTPase-dependent manner and plays a role in orchestrating the global actomyosin cytoskeleton. The interaction with CTTN stabilizes the interaction of DNM2 and actin filaments and stimulates the intrinsic GTPase activity that results in actin filament-barbed ends and increases the sensitivity of filaments in bundles to the actin depolymerizing factor, CFL1. Plays a role in the autophagy process, by participating in the formation of ATG9A vesicles destined for the autophagosomes through its interaction with SNX18, by mediating recycling endosome scission leading to autophagosome release through MAP1LC3B interaction and by regulating maturation of apoptotic cell corpse-containing phagosomes by recruiting PIK3C3 to the phagosome membrane. Also plays a role in cytokinesis. May participate in centrosome cohesion through its interaction with TUBG1. Plays a role in the regulation of neuron morphology, axon growth and formation of neuronal growth cones. Involved in membrane tubulation. The chain is Dynamin-2 from Rattus norvegicus (Rat).